The sequence spans 442 residues: Elongation factor 1-alpha (442 aa).

The tr-type G domain maps to 6–229 (KPHMNLIVIG…ALDNLKPPSV (224 aa)). The interval 15 to 22 (GHVDHGKS) is G1. Residue 15 to 22 (GHVDHGKS) coordinates GTP. Residue S22 participates in Mg(2+) binding. A G2 region spans residues 71-75 (GVTID). Residues 92-95 (DAPG) are G3. GTP-binding positions include 92–96 (DAPGH) and 154–157 (NKMD). The interval 154-157 (NKMD) is G4. Residues 195-197 (SAW) are G5.

The protein belongs to the TRAFAC class translation factor GTPase superfamily. Classic translation factor GTPase family. EF-Tu/EF-1A subfamily.

The protein resides in the cytoplasm. It carries out the reaction GTP + H2O = GDP + phosphate + H(+). Its function is as follows. GTP hydrolase that promotes the GTP-dependent binding of aminoacyl-tRNA to the A-site of ribosomes during protein biosynthesis. This chain is Elongation factor 1-alpha, found in Ignicoccus hospitalis (strain KIN4/I / DSM 18386 / JCM 14125).